A 384-amino-acid chain; its full sequence is Spermidine/putrescine import ATP-binding protein PotA (384 aa).

The 233-residue stretch at 6-238 folds into the ABC transporter domain; sequence IAFQNVSKVF…PINHFVATFI (233 aa). 40–47 serves as a coordination point for ATP; that stretch reads GASGSGKS.

It belongs to the ABC transporter superfamily. Spermidine/putrescine importer (TC 3.A.1.11.1) family. In terms of assembly, the complex is composed of two ATP-binding proteins (PotA), two transmembrane proteins (PotB and PotC) and a solute-binding protein (PotD).

It localises to the cell membrane. The enzyme catalyses ATP + H2O + polyamine-[polyamine-binding protein]Side 1 = ADP + phosphate + polyamineSide 2 + [polyamine-binding protein]Side 1.. Part of the ABC transporter complex PotABCD involved in spermidine/putrescine import. Responsible for energy coupling to the transport system. The sequence is that of Spermidine/putrescine import ATP-binding protein PotA from Streptococcus thermophilus (strain ATCC BAA-491 / LMD-9).